A 110-amino-acid chain; its full sequence is UPF0122 protein GWCH70_1086 (110 aa).

It belongs to the UPF0122 family.

Functionally, might take part in the signal recognition particle (SRP) pathway. This is inferred from the conservation of its genetic proximity to ftsY/ffh. May be a regulatory protein. The chain is UPF0122 protein GWCH70_1086 from Geobacillus sp. (strain WCH70).